We begin with the raw amino-acid sequence, 1299 residues long: Tenascin-N (1299 aa).

An N-terminal signal peptide occupies residues 1-28 (MSLQEMFRFPMGLLLGSVLLVASAPATL). 3 EGF-like domains span residues 167-198 (ERLA…ADCG), 199-229 (YPAC…EDCS), and 230-260 (EKRC…LDCA). Cystine bridges form between Cys-171/Cys-181, Cys-175/Cys-186, Cys-188/Cys-197, Cys-202/Cys-212, Cys-206/Cys-217, Cys-219/Cys-228, Cys-233/Cys-243, Cys-237/Cys-248, and Cys-250/Cys-259. 9 consecutive Fibronectin type-III domains span residues 264-352 (TPQG…TDLA), 353-444 (VLGT…TEID), 445-532 (SPTN…TEID), 533-623 (SPAN…IDSP), 624-709 (KNLV…TDID), 710-800 (SPQN…IDSP), 801-886 (QNLV…TEID), 887-976 (GPKN…LDPP), and 977-1063 (RNLR…VGAR). The segment at 605–624 (GDRESKKADTNAPTDIDSPK) is disordered. The span at 960–977 (QESKKADTKAQTELDPPR) shows a compositional bias: basic and acidic residues. Residues 960–982 (QESKKADTKAQTELDPPRNLRPS) form a disordered region. A Fibrinogen C-terminal domain is found at 1061–1278 (GARFPHPSDC…YVELKIRPHG (218 aa)). Asn-1149 carries N-linked (GlcNAc...) asparagine glycosylation.

Belongs to the tenascin family. As to quaternary structure, homohexamer. As to expression, not detected in normal adult mammary tissues or brain but expressed in most breast tumors and brain tumors, such as glioblastomas, astrocytomas and oligodendrogliomas, tested. In brain tumors, detected around the endothelial cell layer of the clood vessels.

The protein localises to the secreted. It is found in the extracellular space. The protein resides in the extracellular matrix. Functionally, extracellular matrix protein that seems to be a ligand for ITGA8:ITGB1, ITGAV:ITGB1 and ITGA4:ITGB1. Involved in neurite outgrowth and cell migration in hippocampal explants. During endochondral bone formation, inhibits proliferation and differentiation of proteoblasts mediated by canonical WNT signaling. In tumors, stimulates angiogenesis by elongation, migration and sprouting of endothelial cells. Expressed in most mammary tumors, may facilitate tumorigenesis by supporting the migratory behavior of breast cancer cells. The polypeptide is Tenascin-N (Homo sapiens (Human)).